Here is a 128-residue protein sequence, read N- to C-terminus: Large ribosomal subunit protein bL21 (128 aa).

The tract at residues 104 to 128 (GKTPTVGPRPKKEKVVEPAEGEGDH) is disordered. A compositionally biased stretch (basic and acidic residues) spans 116–128 (EKVVEPAEGEGDH).

It belongs to the bacterial ribosomal protein bL21 family. As to quaternary structure, part of the 50S ribosomal subunit. Contacts protein L20.

Functionally, this protein binds to 23S rRNA in the presence of protein L20. The sequence is that of Large ribosomal subunit protein bL21 from Nitrobacter hamburgensis (strain DSM 10229 / NCIMB 13809 / X14).